The chain runs to 79 residues: Apolipoprotein C-II (79 aa).

The signal sequence occupies residues 1 to 21 (MDLKVVAVSFLLLVLCSEAAG). The interval 45–52 (GVEKLRDI) is lipid binding. The interval 56–79 (SVDAVGTYTSILTDQLYHWWCGEQ) is lipoprotein lipase cofactor.

Belongs to the apolipoprotein C2 family. Proapolipoprotein C-II is synthesized as a sialic acid containing glycoprotein which is subsequently desialylated prior to its proteolytic processing. In terms of processing, proapolipoprotein C-II, the major form found in plasma undergoes proteolytic cleavage of its N-terminal hexapeptide to generate apolipoprotein C-II, which occurs as the minor form in plasma.

The protein localises to the secreted. Component of chylomicrons, very low-density lipoproteins (VLDL), low-density lipoproteins (LDL), and high-density lipoproteins (HDL) in plasma. Plays an important role in lipoprotein metabolism as an activator of lipoprotein lipase. Both proapolipoprotein C-II and apolipoprotein C-II can activate lipoprotein lipase. This Alligator mississippiensis (American alligator) protein is Apolipoprotein C-II (APOC2).